The chain runs to 761 residues: Phosphoribosylformylglycinamidine synthase subunit PurL (761 aa).

Residue His-49 is part of the active site. 2 residues coordinate ATP: Tyr-52 and Lys-92. Residue Glu-94 participates in Mg(2+) binding. Substrate contacts are provided by residues 95 to 98 (SHNH) and Arg-117. The Proton acceptor role is filled by His-96. Asp-118 is a binding site for Mg(2+). Position 241 (Gln-241) interacts with substrate. Asp-269 is a binding site for Mg(2+). 318–320 (ESQ) is a substrate binding site. Positions 502 and 539 each coordinate ATP. Asn-540 provides a ligand contact to Mg(2+). Ser-542 is a binding site for substrate.

The protein belongs to the FGAMS family. In terms of assembly, monomer. Part of the FGAM synthase complex composed of 1 PurL, 1 PurQ and 2 PurS subunits.

The protein resides in the cytoplasm. The catalysed reaction is N(2)-formyl-N(1)-(5-phospho-beta-D-ribosyl)glycinamide + L-glutamine + ATP + H2O = 2-formamido-N(1)-(5-O-phospho-beta-D-ribosyl)acetamidine + L-glutamate + ADP + phosphate + H(+). It participates in purine metabolism; IMP biosynthesis via de novo pathway; 5-amino-1-(5-phospho-D-ribosyl)imidazole from N(2)-formyl-N(1)-(5-phospho-D-ribosyl)glycinamide: step 1/2. Part of the phosphoribosylformylglycinamidine synthase complex involved in the purines biosynthetic pathway. Catalyzes the ATP-dependent conversion of formylglycinamide ribonucleotide (FGAR) and glutamine to yield formylglycinamidine ribonucleotide (FGAM) and glutamate. The FGAM synthase complex is composed of three subunits. PurQ produces an ammonia molecule by converting glutamine to glutamate. PurL transfers the ammonia molecule to FGAR to form FGAM in an ATP-dependent manner. PurS interacts with PurQ and PurL and is thought to assist in the transfer of the ammonia molecule from PurQ to PurL. This is Phosphoribosylformylglycinamidine synthase subunit PurL from Chlorobium chlorochromatii (strain CaD3).